A 328-amino-acid polypeptide reads, in one-letter code: Putative HTH-type transcriptional regulatory protein MA_3524 (328 aa).

The HTH cro/C1-type domain occupies 132-190 (LKKARTDQSMSLGTLASMVGVSRRTISKYEEEGMDASIDVVLQLEDIFGVELARPIDIL). A DNA-binding region (H-T-H motif) is located at residues 143 to 162 (LGTLASMVGVSRRTISKYEE).

The chain is Putative HTH-type transcriptional regulatory protein MA_3524 from Methanosarcina acetivorans (strain ATCC 35395 / DSM 2834 / JCM 12185 / C2A).